The chain runs to 185 residues: Transcription factor FapR (185 aa).

It belongs to the FapR family.

Its function is as follows. Transcriptional factor involved in regulation of membrane lipid biosynthesis by repressing genes involved in fatty acid and phospholipid metabolism. The polypeptide is Transcription factor FapR (Staphylococcus aureus (strain Mu3 / ATCC 700698)).